The chain runs to 606 residues: Protein couch potato (606 aa).

Residues 81-105 carry the Nuclear localization signal motif; that stretch reads IKRRPTLPQTPASAPQVLSPSPKRQ. Tandem repeats lie at residues 91 to 95, 109 to 113, 114 to 118, 122 to 126, 128 to 132, 134 to 138, and 159 to 163. The segment at 91 to 164 is 7 X 5 AA approximate repeats of P-V-S-V-P; it reads PASAPQVLSP…SHSHPISHPH (74 aa). 4 disordered regions span residues 147–166, 282–311, 324–365, and 388–410; these read QIAHTHQISHSHPISHPHHH, QQQQHILLSSGSSSSKHNSNNNSNTSAGAA, VPTT…TSAA, and PATSAVSDSNNNLNSSSSSNSNS. The span at 344 to 365 shows a compositional bias: low complexity; sequence SNSATASAPTTPSPAGSVTSAA. One can recognise an RRM domain in the interval 442 to 524; sequence RTLFVSGLPM…QTIRLEFAKS (83 aa).

Expressed in neural precursors and their daughter cells in the embryonic peripheral nervous system. Less abundant in a number of glial cells in the peripheral and central nervous systems and also present at low levels in the developing gut.

Its subcellular location is the nucleus. In terms of biological role, may play a role in the development or function of the peripheral nervous system by regulating the processing of nervous system-specific transcripts. This is Protein couch potato (cpo) from Drosophila melanogaster (Fruit fly).